The primary structure comprises 475 residues: ATP synthase subunit beta, chloroplastic (475 aa).

Position 155–162 (155–162 (GGAGVGKT)) interacts with ATP.

Belongs to the ATPase alpha/beta chains family. In terms of assembly, F-type ATPases have 2 components, CF(1) - the catalytic core - and CF(0) - the membrane proton channel. CF(1) has five subunits: alpha(3), beta(3), gamma(1), delta(1), epsilon(1). CF(0) has four main subunits: a(1), b(1), b'(1) and c(9-12).

The protein localises to the plastid. It is found in the chloroplast thylakoid membrane. The enzyme catalyses ATP + H2O + 4 H(+)(in) = ADP + phosphate + 5 H(+)(out). Functionally, produces ATP from ADP in the presence of a proton gradient across the membrane. The catalytic sites are hosted primarily by the beta subunits. This Porphyra purpurea (Red seaweed) protein is ATP synthase subunit beta, chloroplastic.